An 813-amino-acid chain; its full sequence is Putative ATPase, plasma membrane-like (813 aa).

The Cytoplasmic portion of the chain corresponds to 1-66 (MATGDSLEDI…KKKEHITLRF (66 aa)). Residues 67–86 (FALMFKPLSWVIQAAAIMAM) form a helical membrane-spanning segment. The Extracellular segment spans residues 87-94 (LFANGDGR). Residues 95-115 (QLFLGIVCLLIVNTIICYLKE) traverse the membrane as a helical segment. Residues 116–245 (DDAANVVAMA…GHFRKVVTEI (130 aa)) are Cytoplasmic-facing. Residues 246-266 (ENLCVISIAIGISIEVIVMYW) traverse the membrane as a helical segment. The Extracellular segment spans residues 267–275 (IQRRNFSDV). The chain crosses the membrane as a helical span at residues 276 to 293 (INNLLVLVIGGIPLAMPT). Residues 294-555 (VLYVIMVTGS…ASRAILQQMK (262 aa)) lie on the Cytoplasmic side of the membrane. Residue Asp331 is the 4-aspartylphosphate intermediate of the active site. Mg(2+) contacts are provided by Asp500 and Asp504. A helical transmembrane segment spans residues 556–577 (HYTIYAVSITIRVVFGFMFIAL). Residues 578–582 (IWKFD) are Extracellular-facing. A helical transmembrane segment spans residues 583-605 (FSPFMVLAIALLNEETTKAITMD). Residues 606 to 622 (NVTNPSPTPDSLKLKEI) lie on the Cytoplasmic side of the membrane. A helical transmembrane segment spans residues 623–643 (FATGVVYGSYMALITVVFFWA). Residues 644 to 664 (AYRTDIFPRTFHVRDLRGNEA) lie on the Extracellular side of the membrane. The helical transmembrane segment at 665–685 (EMMCALYLQVSIMSQALFFVI) threads the bilayer. The Cytoplasmic portion of the chain corresponds to 686-697 (QSRSWFFVERPG). Residues 698-718 (ELLFLSFVTVQTIATTLAVYA) traverse the membrane as a helical segment. Residues 719–726 (SWETARIE) lie on the Extracellular side of the membrane. The chain crosses the membrane as a helical span at residues 727–747 (GIGWSWAGVIWLYNIIFFFPL). Topologically, residues 748-813 (DIMKFGIRYI…SQDLRGVGWV (66 aa)) are cytoplasmic. Ser776 carries the post-translational modification Phosphoserine.

Belongs to the cation transport ATPase (P-type) (TC 3.A.3) family. Type IIIA subfamily.

The protein localises to the membrane. This Arabidopsis thaliana (Mouse-ear cress) protein is Putative ATPase, plasma membrane-like.